The primary structure comprises 937 residues: Valine--tRNA ligase (937 aa).

Residues 44 to 54 carry the 'HIGH' region motif; the sequence is PNVTGTLHMGH. Positions 548 to 552 match the 'KMSKS' region motif; it reads KMSKS. ATP is bound at residue Lys551. Residues 874–937 are a coiled coil; that stretch reads AAETARLTKE…KLKAQLLKLA (64 aa).

Belongs to the class-I aminoacyl-tRNA synthetase family. ValS type 1 subfamily. In terms of assembly, monomer.

It localises to the cytoplasm. It carries out the reaction tRNA(Val) + L-valine + ATP = L-valyl-tRNA(Val) + AMP + diphosphate. Functionally, catalyzes the attachment of valine to tRNA(Val). As ValRS can inadvertently accommodate and process structurally similar amino acids such as threonine, to avoid such errors, it has a 'posttransfer' editing activity that hydrolyzes mischarged Thr-tRNA(Val) in a tRNA-dependent manner. The chain is Valine--tRNA ligase from Laribacter hongkongensis (strain HLHK9).